The chain runs to 352 residues: 3-isopropylmalate dehydrogenase (352 aa).

71–87 (GAHDSAWNQLPRHLRPE) is a binding site for NAD(+). 4 residues coordinate substrate: Arg94, Arg104, Arg132, and Asp218. 3 residues coordinate Mg(2+): Asp218, Asp242, and Asp246. 275-287 (GSAPDIAGQGVAN) is a binding site for NAD(+).

The protein belongs to the isocitrate and isopropylmalate dehydrogenases family. LeuB type 1 subfamily. As to quaternary structure, homodimer. The cofactor is Mg(2+). Mn(2+) is required as a cofactor.

The protein localises to the cytoplasm. The catalysed reaction is (2R,3S)-3-isopropylmalate + NAD(+) = 4-methyl-2-oxopentanoate + CO2 + NADH. It functions in the pathway amino-acid biosynthesis; L-leucine biosynthesis; L-leucine from 3-methyl-2-oxobutanoate: step 3/4. In terms of biological role, catalyzes the oxidation of 3-carboxy-2-hydroxy-4-methylpentanoate (3-isopropylmalate) to 3-carboxy-4-methyl-2-oxopentanoate. The product decarboxylates to 4-methyl-2 oxopentanoate. The protein is 3-isopropylmalate dehydrogenase of Deinococcus radiodurans (strain ATCC 13939 / DSM 20539 / JCM 16871 / CCUG 27074 / LMG 4051 / NBRC 15346 / NCIMB 9279 / VKM B-1422 / R1).